A 264-amino-acid chain; its full sequence is 5'-nucleotidase SurE (264 aa).

The a divalent metal cation site is built by aspartate 10, aspartate 11, serine 43, and asparagine 97.

It belongs to the SurE nucleotidase family. Requires a divalent metal cation as cofactor.

It localises to the cytoplasm. The enzyme catalyses a ribonucleoside 5'-phosphate + H2O = a ribonucleoside + phosphate. Its function is as follows. Nucleotidase that shows phosphatase activity on nucleoside 5'-monophosphates. This is 5'-nucleotidase SurE from Sulfurimonas denitrificans (strain ATCC 33889 / DSM 1251) (Thiomicrospira denitrificans (strain ATCC 33889 / DSM 1251)).